We begin with the raw amino-acid sequence, 555 residues long: Glutamine--tRNA ligase (555 aa).

The 'HIGH' region signature appears at 34–44 (PEPNGYLHIGH). ATP is bound by residues 35–37 (EPN) and 41–47 (HIGHAKS). Residues Asp-67 and Tyr-212 each coordinate L-glutamine. ATP-binding positions include Thr-231, 261–262 (RL), and 269–271 (MSK). The short motif at 268–272 (VMSKR) is the 'KMSKS' region element. Positions 317-324 (TKQDNTIE) are interaction with tRNA.

Belongs to the class-I aminoacyl-tRNA synthetase family. In terms of assembly, monomer.

It localises to the cytoplasm. It catalyses the reaction tRNA(Gln) + L-glutamine + ATP = L-glutaminyl-tRNA(Gln) + AMP + diphosphate. The sequence is that of Glutamine--tRNA ligase from Salmonella schwarzengrund (strain CVM19633).